The following is a 245-amino-acid chain: MIIPALDLIDGTVVRLHQGDYGKQRDYGNDPLPRLQDYAAQGAEVLHLVDLTGAKDPAKRQIPLIKTLVAGVNVPVQVGGGVRSEEDVAALLEAGVARVVVGSTAVKSPDMVKGWFERFGADALVLALDVRIDEQGNKQVAVSGWQENSGVSLEQLVETYLPVGLKHVLCTDISRDGTLAGSNVSLYEEVCARYPQVAFQSSGGIGEINDVAALRGTGVRGVIVGRALLEGKFTVKEAIACWQNA.

Asp7 serves as the catalytic Proton acceptor. Asp129 serves as the catalytic Proton donor.

The protein belongs to the HisA/HisF family.

The protein resides in the cytoplasm. It carries out the reaction 1-(5-phospho-beta-D-ribosyl)-5-[(5-phospho-beta-D-ribosylamino)methylideneamino]imidazole-4-carboxamide = 5-[(5-phospho-1-deoxy-D-ribulos-1-ylimino)methylamino]-1-(5-phospho-beta-D-ribosyl)imidazole-4-carboxamide. It participates in amino-acid biosynthesis; L-histidine biosynthesis; L-histidine from 5-phospho-alpha-D-ribose 1-diphosphate: step 4/9. The protein is 1-(5-phosphoribosyl)-5-[(5-phosphoribosylamino)methylideneamino] imidazole-4-carboxamide isomerase of Escherichia coli O7:K1 (strain IAI39 / ExPEC).